Consider the following 428-residue polypeptide: Serine--tRNA ligase (428 aa).

235–237 (TAE) contacts L-serine. ATP is bound at residue 266-268 (RYE). Glutamate 289 is an L-serine binding site. 353 to 356 (EVSS) is an ATP binding site. Serine 389 contributes to the L-serine binding site.

The protein belongs to the class-II aminoacyl-tRNA synthetase family. Type-1 seryl-tRNA synthetase subfamily. Homodimer. The tRNA molecule binds across the dimer.

It is found in the cytoplasm. It catalyses the reaction tRNA(Ser) + L-serine + ATP = L-seryl-tRNA(Ser) + AMP + diphosphate + H(+). The catalysed reaction is tRNA(Sec) + L-serine + ATP = L-seryl-tRNA(Sec) + AMP + diphosphate + H(+). It participates in aminoacyl-tRNA biosynthesis; selenocysteinyl-tRNA(Sec) biosynthesis; L-seryl-tRNA(Sec) from L-serine and tRNA(Sec): step 1/1. Functionally, catalyzes the attachment of serine to tRNA(Ser). Is also able to aminoacylate tRNA(Sec) with serine, to form the misacylated tRNA L-seryl-tRNA(Sec), which will be further converted into selenocysteinyl-tRNA(Sec). In Blochmanniella pennsylvanica (strain BPEN), this protein is Serine--tRNA ligase.